Reading from the N-terminus, the 275-residue chain is uncharacterized protein (275 aa).

This sequence belongs to the SMP-30/CGR1 family.

This is an uncharacterized protein from Sulfolobus acidocaldarius (strain ATCC 33909 / DSM 639 / JCM 8929 / NBRC 15157 / NCIMB 11770).